A 688-amino-acid polypeptide reads, in one-letter code: Glycine--tRNA ligase beta subunit (688 aa).

Belongs to the class-II aminoacyl-tRNA synthetase family. In terms of assembly, tetramer of two alpha and two beta subunits.

Its subcellular location is the cytoplasm. The enzyme catalyses tRNA(Gly) + glycine + ATP = glycyl-tRNA(Gly) + AMP + diphosphate. In Psychromonas ingrahamii (strain DSM 17664 / CCUG 51855 / 37), this protein is Glycine--tRNA ligase beta subunit.